Here is a 239-residue protein sequence, read N- to C-terminus: Peptidyl-tRNA hydrolase (239 aa).

Tyr-14 is a binding site for tRNA. His-19 (proton acceptor) is an active-site residue. The tRNA site is built by Phe-64, Asn-66, and Asn-112. The interval 188–239 (APPRSSTSKPKAQDNREDAAQAAEERSETRTPPEARPEDTRSALQKLADKFR) is disordered. A compositionally biased stretch (basic and acidic residues) spans 198 to 239 (KAQDNREDAAQAAEERSETRTPPEARPEDTRSALQKLADKFR).

The protein belongs to the PTH family. In terms of assembly, monomer.

The protein resides in the cytoplasm. The enzyme catalyses an N-acyl-L-alpha-aminoacyl-tRNA + H2O = an N-acyl-L-amino acid + a tRNA + H(+). In terms of biological role, hydrolyzes ribosome-free peptidyl-tRNAs (with 1 or more amino acids incorporated), which drop off the ribosome during protein synthesis, or as a result of ribosome stalling. Catalyzes the release of premature peptidyl moieties from peptidyl-tRNA molecules trapped in stalled 50S ribosomal subunits, and thus maintains levels of free tRNAs and 50S ribosomes. The protein is Peptidyl-tRNA hydrolase of Jannaschia sp. (strain CCS1).